The primary structure comprises 266 residues: Type III pantothenate kinase (266 aa).

ATP is bound at residue 6–13; it reads DIGNSRIK. Substrate is bound by residues Tyr-94 and 101-104; that span reads GIDR. The Proton acceptor role is filled by Asp-103. Asp-128 is a binding site for K(+). Thr-131 contributes to the ATP binding site. Position 183 (Thr-183) interacts with substrate.

The protein belongs to the type III pantothenate kinase family. In terms of assembly, homodimer. It depends on NH4(+) as a cofactor. The cofactor is K(+).

Its subcellular location is the cytoplasm. The catalysed reaction is (R)-pantothenate + ATP = (R)-4'-phosphopantothenate + ADP + H(+). The protein operates within cofactor biosynthesis; coenzyme A biosynthesis; CoA from (R)-pantothenate: step 1/5. In terms of biological role, catalyzes the phosphorylation of pantothenate (Pan), the first step in CoA biosynthesis. This chain is Type III pantothenate kinase, found in Nitrosococcus oceani (strain ATCC 19707 / BCRC 17464 / JCM 30415 / NCIMB 11848 / C-107).